The primary structure comprises 369 residues: Phosphoribosylformylglycinamidine cyclo-ligase (369 aa).

Residues 1 to 22 (MSKRDTSQPKTGQPKTSKRRNG) form a disordered region.

It belongs to the AIR synthase family.

The protein localises to the cytoplasm. The enzyme catalyses 2-formamido-N(1)-(5-O-phospho-beta-D-ribosyl)acetamidine + ATP = 5-amino-1-(5-phospho-beta-D-ribosyl)imidazole + ADP + phosphate + H(+). It functions in the pathway purine metabolism; IMP biosynthesis via de novo pathway; 5-amino-1-(5-phospho-D-ribosyl)imidazole from N(2)-formyl-N(1)-(5-phospho-D-ribosyl)glycinamide: step 2/2. The chain is Phosphoribosylformylglycinamidine cyclo-ligase from Mesorhizobium japonicum (strain LMG 29417 / CECT 9101 / MAFF 303099) (Mesorhizobium loti (strain MAFF 303099)).